A 448-amino-acid chain; its full sequence is Methylenetetrahydrofolate--tRNA-(uracil-5-)-methyltransferase TrmFO (448 aa).

Position 13–18 (13–18 (GAGLAG)) interacts with FAD.

The protein belongs to the MnmG family. TrmFO subfamily. Requires FAD as cofactor.

The protein localises to the cytoplasm. The enzyme catalyses uridine(54) in tRNA + (6R)-5,10-methylene-5,6,7,8-tetrahydrofolate + NADH + H(+) = 5-methyluridine(54) in tRNA + (6S)-5,6,7,8-tetrahydrofolate + NAD(+). The catalysed reaction is uridine(54) in tRNA + (6R)-5,10-methylene-5,6,7,8-tetrahydrofolate + NADPH + H(+) = 5-methyluridine(54) in tRNA + (6S)-5,6,7,8-tetrahydrofolate + NADP(+). Functionally, catalyzes the folate-dependent formation of 5-methyl-uridine at position 54 (M-5-U54) in all tRNAs. This Streptococcus pyogenes serotype M28 (strain MGAS6180) protein is Methylenetetrahydrofolate--tRNA-(uracil-5-)-methyltransferase TrmFO.